A 139-amino-acid chain; its full sequence is Aspartate 1-decarboxylase (139 aa).

S25 serves as the catalytic Schiff-base intermediate with substrate; via pyruvic acid. Pyruvic acid (Ser) is present on S25. T57 lines the substrate pocket. Y58 serves as the catalytic Proton donor. Substrate is bound at residue 73-75 (GAA). A disordered region spans residues 116–139 (ELGEDPAHAPAGSGLKDPRHPEGE).

Belongs to the PanD family. In terms of assembly, heterooctamer of four alpha and four beta subunits. The cofactor is pyruvate. Is synthesized initially as an inactive proenzyme, which is activated by self-cleavage at a specific serine bond to produce a beta-subunit with a hydroxyl group at its C-terminus and an alpha-subunit with a pyruvoyl group at its N-terminus.

It localises to the cytoplasm. It catalyses the reaction L-aspartate + H(+) = beta-alanine + CO2. It functions in the pathway cofactor biosynthesis; (R)-pantothenate biosynthesis; beta-alanine from L-aspartate: step 1/1. Functionally, catalyzes the pyruvoyl-dependent decarboxylation of aspartate to produce beta-alanine. The protein is Aspartate 1-decarboxylase of Corynebacterium urealyticum (strain ATCC 43042 / DSM 7109).